Here is a 216-residue protein sequence, read N- to C-terminus: RNA pyrophosphohydrolase (216 aa).

Residues 6–149 (GFRPNVGIIL…KRDVYQLALT (144 aa)) enclose the Nudix hydrolase domain. The Nudix box signature appears at 38 to 59 (GGIKYGETPMQAMYRELHEETG).

This sequence belongs to the Nudix hydrolase family. RppH subfamily. A divalent metal cation is required as a cofactor.

Functionally, accelerates the degradation of transcripts by removing pyrophosphate from the 5'-end of triphosphorylated RNA, leading to a more labile monophosphorylated state that can stimulate subsequent ribonuclease cleavage. The sequence is that of RNA pyrophosphohydrolase from Burkholderia ambifaria (strain MC40-6).